Here is a 363-residue protein sequence, read N- to C-terminus: UDP-N-acetylglucosamine--N-acetylmuramyl-(pentapeptide) pyrophosphoryl-undecaprenol N-acetylglucosamine transferase (363 aa).

Residues 16-18 (TGG), asparagine 128, arginine 167, serine 195, isoleucine 249, 268-273 (ALTVSE), and glutamine 294 contribute to the UDP-N-acetyl-alpha-D-glucosamine site.

It belongs to the glycosyltransferase 28 family. MurG subfamily.

The protein localises to the cell inner membrane. The catalysed reaction is di-trans,octa-cis-undecaprenyl diphospho-N-acetyl-alpha-D-muramoyl-L-alanyl-D-glutamyl-meso-2,6-diaminopimeloyl-D-alanyl-D-alanine + UDP-N-acetyl-alpha-D-glucosamine = di-trans,octa-cis-undecaprenyl diphospho-[N-acetyl-alpha-D-glucosaminyl-(1-&gt;4)]-N-acetyl-alpha-D-muramoyl-L-alanyl-D-glutamyl-meso-2,6-diaminopimeloyl-D-alanyl-D-alanine + UDP + H(+). It participates in cell wall biogenesis; peptidoglycan biosynthesis. Functionally, cell wall formation. Catalyzes the transfer of a GlcNAc subunit on undecaprenyl-pyrophosphoryl-MurNAc-pentapeptide (lipid intermediate I) to form undecaprenyl-pyrophosphoryl-MurNAc-(pentapeptide)GlcNAc (lipid intermediate II). The protein is UDP-N-acetylglucosamine--N-acetylmuramyl-(pentapeptide) pyrophosphoryl-undecaprenol N-acetylglucosamine transferase of Marinobacter nauticus (strain ATCC 700491 / DSM 11845 / VT8) (Marinobacter aquaeolei).